We begin with the raw amino-acid sequence, 340 residues long: Cysteinyl leukotriene receptor 1 (340 aa).

Topologically, residues 1-31 (MDETGNPTIPPASNNTCYDSIDDFRNQVYST) are extracellular. A glycan (N-linked (GlcNAc...) asparagine) is linked at Asn-14. Residues 32–52 (LYSMISVVGFFGNGFVLYVLV) form a helical membrane-spanning segment. At 53–60 (KTYHEKSA) the chain is on the cytoplasmic side. Residues 61-81 (FQVYMINLAVADLLCVCTLPL) form a helical membrane-spanning segment. Residues 82–109 (RVAYYVHKGIWLFGDFLCRLSTYALYVN) are Extracellular-facing. A disulfide bridge connects residues Cys-99 and Cys-176. Residues 110–130 (LYCSIFFMTAMSFFRCVAIVF) traverse the membrane as a helical segment. The Cytoplasmic portion of the chain corresponds to 131–144 (PVQNISLVTQKKAR). The chain crosses the membrane as a helical span at residues 145–165 (LVCIAIWMFVILTSSPFLMAN). At 166–196 (TYKDEKNNTKCFEPPQDNQAKNYVLILHYVS) the chain is on the extracellular side. The N-linked (GlcNAc...) asparagine glycan is linked to Asn-172. Residues 197-217 (LFIGFIIPFITIIVCYTMIIF) form a helical membrane-spanning segment. Over 218 to 233 (TLLKSSMKKNLSSRKR) the chain is Cytoplasmic. A helical transmembrane segment spans residues 234-254 (AIGMIIVVTAAFLVSFMPYHI). Topologically, residues 255-279 (QRTIHLHFLHNKTKPCDSILRMQKS) are extracellular. An N-linked (GlcNAc...) asparagine glycan is attached at Asn-265. Residues 280 to 300 (VVITLSLAASNCCFDPLLYFF) form a helical membrane-spanning segment. The Cytoplasmic portion of the chain corresponds to 301-340 (SGGNFRRRLSTIRKYSLSSMTYIPKKKTSLPQKGKDICKE).

The protein belongs to the G-protein coupled receptor 1 family.

It is found in the cell membrane. Functionally, receptor for cysteinyl leukotrienes mediating bronchoconstriction of individuals with and without asthma. Stimulation by LTD4 results in the contraction and proliferation of smooth muscle, edema, eosinophil migration and damage to the mucus layer in the lung. This response is mediated via a G-protein that activates a phosphatidylinositol-calcium second messenger system. The chain is Cysteinyl leukotriene receptor 1 (CYSLTR1) from Cavia porcellus (Guinea pig).